The following is a 51-amino-acid chain: Nawaprin (51 aa).

The WAP domain maps to 1–50; it reads NEKSGSCPDMSMPIPPLGICKTLCNSDSGCPNVQKCCKNGCGFMTCTTPV. 4 cysteine pairs are disulfide-bonded: Cys-7-Cys-37, Cys-20-Cys-41, Cys-24-Cys-36, and Cys-30-Cys-46.

Expressed by the venom gland.

It localises to the secreted. In terms of biological role, damages membranes of susceptible bacteria. Has no hemolytic activity. Not toxic to mice. Does not inhibit the proteinases elastase and cathepsin G. In Naja nigricollis (Black-necked spitting cobra), this protein is Nawaprin.